Reading from the N-terminus, the 105-residue chain is Large ribosomal subunit protein bL21 (105 aa).

The protein belongs to the bacterial ribosomal protein bL21 family. Part of the 50S ribosomal subunit. Contacts protein L20.

In terms of biological role, this protein binds to 23S rRNA in the presence of protein L20. The polypeptide is Large ribosomal subunit protein bL21 (Stenotrophomonas maltophilia (strain R551-3)).